The following is a 582-amino-acid chain: Semenogelin-2 (582 aa).

The signal sequence occupies residues 1-23; that stretch reads MKSIILFVLSLLLILEKQAAVMG. Disordered regions lie at residues 26–65, 132–159, 272–295, 318–358, 379–417, and 439–582; these read CGSK…SFSI, GGQA…SSQY, NLNQ…RTEE, TEEK…ERHL, EEQI…EERR, and EEQI…PVST. 2 stretches are compositionally biased toward polar residues: residues 31–40 and 137–159; these read QLPSGSSQFP and RGTQ…SSQY. A compositionally biased stretch (polar residues) spans 325 to 335; the sequence is KSQNQVTIHSQ. Residues 336–345 show a composition bias toward basic and acidic residues; sequence GQEHGHKENK. Composition is skewed to polar residues over residues 379-397, 439-457, 487-496, and 506-524; these read EEQI…SQAQ, KDVSQSSTSF, and SQIQ…QNAK. Basic and acidic residues-rich tracts occupy residues 525 to 552 and 559 to 582; these read GKSD…ESSE and TEHE…PVST.

Belongs to the semenogelin family. Interacts with SERPINA5.

It localises to the secreted. Participates in the formation of a gel matrix (sperm coagulum) entrapping the accessory gland secretions and ejaculated spermatozoa. The polypeptide is Semenogelin-2 (SEMG2) (Hylobates lar (Lar gibbon)).